The chain runs to 225 residues: Respiratory nitrate reductase 1 gamma chain (225 aa).

M1 carries the N-formylmethionine modification. Over 1–3 the chain is Periplasmic; the sequence is MQF. Residues 4 to 29 traverse the membrane as a helical segment; sequence LNMFFFDIYPYIAGAVFLIGSWLRYD. The Cytoplasmic segment spans residues 30-47; sequence YGQYTWRAASSQMLDRKG. A helical transmembrane segment spans residues 48 to 70; sequence MNLASNLFHIGILGIFVGHFFGM. Heme b is bound by residues H56 and H66. The Periplasmic segment spans residues 71 to 82; sequence LTPHWMYEAWLP. Residues 83–112 form a helical membrane-spanning segment; it reads IEVKQKMAMFAGGASGVLCLIGGVLLLKRR. At 113-124 the chain is on the cytoplasmic side; it reads LFSPRVRATTTG. Residues 125 to 148 form a helical membrane-spanning segment; it reads ADILILSLLVIQCALGLLTIPFSA. The Periplasmic segment spans residues 149 to 182; sequence QHMDGSEMMKLVGWAQSVVTFHGGASQHLDGVAF. Residues 183 to 198 form a helical membrane-spanning segment; sequence IFRLHLVLGMTLFLLF. Heme b contacts are provided by H187 and H205. The Cytoplasmic portion of the chain corresponds to 199–225; the sequence is PFSRLIHIWSVPVEYLTRKYQLVRARH.

As to quaternary structure, dimer of heterotrimers each composed of an alpha, a beta and a gamma chain. Alpha and beta are catalytic chains; gamma chains are involved in binding the enzyme complex to the cytoplasmic membrane. Heme is required as a cofactor.

Its subcellular location is the cell inner membrane. It catalyses the reaction nitrate + a quinol = a quinone + nitrite + H2O. Functionally, the nitrate reductase enzyme complex allows E.coli to use nitrate as an electron acceptor during anaerobic growth. The gamma chain is a membrane-embedded heme-iron unit resembling cytochrome b, which transfers electrons from quinones to the beta subunit. This is Respiratory nitrate reductase 1 gamma chain (narI) from Escherichia coli (strain K12).